The primary structure comprises 230 residues: Leucyl/phenylalanyl-tRNA--protein transferase (230 aa).

This sequence belongs to the L/F-transferase family.

The protein localises to the cytoplasm. It carries out the reaction N-terminal L-lysyl-[protein] + L-leucyl-tRNA(Leu) = N-terminal L-leucyl-L-lysyl-[protein] + tRNA(Leu) + H(+). It catalyses the reaction N-terminal L-arginyl-[protein] + L-leucyl-tRNA(Leu) = N-terminal L-leucyl-L-arginyl-[protein] + tRNA(Leu) + H(+). The enzyme catalyses L-phenylalanyl-tRNA(Phe) + an N-terminal L-alpha-aminoacyl-[protein] = an N-terminal L-phenylalanyl-L-alpha-aminoacyl-[protein] + tRNA(Phe). Functionally, functions in the N-end rule pathway of protein degradation where it conjugates Leu, Phe and, less efficiently, Met from aminoacyl-tRNAs to the N-termini of proteins containing an N-terminal arginine or lysine. This chain is Leucyl/phenylalanyl-tRNA--protein transferase, found in Rhodopseudomonas palustris (strain BisB18).